The primary structure comprises 51 residues: Large ribosomal subunit protein eL39 (51 aa).

The tract at residues Met1–Pro22 is disordered. Positions Phe7 to Asn20 are enriched in basic residues.

This sequence belongs to the eukaryotic ribosomal protein eL39 family. In terms of assembly, component of the large ribosomal subunit (LSU). Mature yeast ribosomes consist of a small (40S) and a large (60S) subunit. The 40S small subunit contains 1 molecule of ribosomal RNA (18S rRNA) and 33 different proteins (encoded by 57 genes). The large 60S subunit contains 3 rRNA molecules (25S, 5.8S and 5S rRNA) and 46 different proteins (encoded by 81 genes). eL39 interacts with YIH1.

The protein resides in the cytoplasm. Functionally, component of the ribosome, a large ribonucleoprotein complex responsible for the synthesis of proteins in the cell. The small ribosomal subunit (SSU) binds messenger RNAs (mRNAs) and translates the encoded message by selecting cognate aminoacyl-transfer RNA (tRNA) molecules. The large subunit (LSU) contains the ribosomal catalytic site termed the peptidyl transferase center (PTC), which catalyzes the formation of peptide bonds, thereby polymerizing the amino acids delivered by tRNAs into a polypeptide chain. The nascent polypeptides leave the ribosome through a tunnel in the LSU and interact with protein factors that function in enzymatic processing, targeting, and the membrane insertion of nascent chains at the exit of the ribosomal tunnel. The protein is Large ribosomal subunit protein eL39 of Saccharomyces cerevisiae (strain ATCC 204508 / S288c) (Baker's yeast).